The chain runs to 771 residues: Metal transporter CNNM4 (771 aa).

At 1 to 175 (MAPGGGGGRR…LLFMVEEHGR (175 aa)) the chain is on the extracellular side. A glycan (N-linked (GlcNAc...) asparagine) is linked at Asn119. Residues 175-355 (RFLPLWLHIL…EPYNDLVKEE (181 aa)) enclose the CNNM transmembrane domain. Residues 176-196 (FLPLWLHILLVMVLLVLSGIF) form a helical membrane-spanning segment. Residues 197–237 (SGLNLGLMALDPMELRIVQNCGTEKERKYARKIEPIRRKGN) lie on the Cytoplasmic side of the membrane. An intramembrane region (helical) is located at residues 238-258 (YLLCSLLLGNVLVNTSLTILL). The Cytoplasmic segment spans residues 259 to 261 (DNL). A helical transmembrane segment spans residues 262–282 (IGSGIMAVASSTIGIVIFGEI). Residues 283–290 (LPQALCSR) lie on the Extracellular side of the membrane. A helical membrane pass occupies residues 291 to 313 (HGLAVGANTIVLTKVFMLLTFPL). Residues 314 to 771 (SFPISKLLDF…LHRASEEETI (458 aa)) lie on the Cytoplasmic side of the membrane. CBS domains lie at 374–435 (MTQL…CTPL) and 442–508 (YNHP…ILDE). A phosphoserine mark is found at Ser657, Ser661, and Ser766.

Belongs to the ACDP family. As to quaternary structure, interacts with COX11. Cornea, retina, teeth (at protein level). In the retina it is predominantly localized to the outer plexiform layer, inner plexiform layer and ganglion cell layer. In the tooth strongest expression is observed in the cell body of the ameloblasts. Expressed at high levels in the gastrointestinal tract and testis.

Its subcellular location is the cell membrane. Probable metal transporter. The interaction with the metal ion chaperone COX11 suggests that it may play a role in sensory neuron functions. May play a role in biomineralization and retinal function. The sequence is that of Metal transporter CNNM4 (Cnnm4) from Mus musculus (Mouse).